The primary structure comprises 360 residues: Phospho-N-acetylmuramoyl-pentapeptide-transferase (360 aa).

Helical transmembrane passes span 27 to 47, 70 to 90, 98 to 118, 134 to 154, 168 to 188, 199 to 219, 239 to 259, 263 to 283, 288 to 308, and 337 to 357; these read GALFTAGFFVFWFGPWIISLL, GTPTMGGLMILAGAVVSILLW, VWVTLAVTLGFGAIGFYDDYL, LLLEFAIAGAACLLISIYSPA, ALLNLGWFWVPFAAFVIVGAG, GLAIVPVMIACGTFGVIAYLV, LAVVCGAVIGAGLGFLWFNAP, IFMGDTGSLALGGLLGAIAVA, IVLAIVGGLFVLEIMSVIIQV, and QVVIRFWIIAVILALVGLATL.

This sequence belongs to the glycosyltransferase 4 family. MraY subfamily. Mg(2+) is required as a cofactor.

It localises to the cell inner membrane. The catalysed reaction is UDP-N-acetyl-alpha-D-muramoyl-L-alanyl-gamma-D-glutamyl-meso-2,6-diaminopimeloyl-D-alanyl-D-alanine + di-trans,octa-cis-undecaprenyl phosphate = di-trans,octa-cis-undecaprenyl diphospho-N-acetyl-alpha-D-muramoyl-L-alanyl-D-glutamyl-meso-2,6-diaminopimeloyl-D-alanyl-D-alanine + UMP. Its pathway is cell wall biogenesis; peptidoglycan biosynthesis. Functionally, catalyzes the initial step of the lipid cycle reactions in the biosynthesis of the cell wall peptidoglycan: transfers peptidoglycan precursor phospho-MurNAc-pentapeptide from UDP-MurNAc-pentapeptide onto the lipid carrier undecaprenyl phosphate, yielding undecaprenyl-pyrophosphoryl-MurNAc-pentapeptide, known as lipid I. The chain is Phospho-N-acetylmuramoyl-pentapeptide-transferase from Methylorubrum populi (strain ATCC BAA-705 / NCIMB 13946 / BJ001) (Methylobacterium populi).